Reading from the N-terminus, the 352-residue chain is Guanine nucleotide-binding protein alpha-7 subunit (352 aa).

The N-myristoyl glycine moiety is linked to residue G2. C4 carries S-palmitoyl cysteine lipidation. The G-alpha domain occupies 32-352 (RIIKLLLLGA…AKNLKSMGLC (321 aa)). The tract at residues 35–48 (KLLLLGAGESGKST) is G1 motif. GTP-binding positions include 40–47 (GAGESGKS), 174–180 (LRTRIKT), 199–203 (DVGGQ), 268–271 (NKKD), and A324. 2 residues coordinate Mg(2+): S47 and T180. Positions 172-180 (DLLRTRIKT) are G2 motif. The tract at residues 195 to 204 (FRVIDVGGQR) is G3 motif. The interval 264-271 (ILFLNKKD) is G4 motif. Residues 322 to 327 (TCATDT) form a G5 motif region.

It belongs to the G-alpha family. G(i/o/t/z) subfamily. As to quaternary structure, g proteins are composed of 3 units; alpha, beta and gamma. The alpha chain contains the guanine nucleotide binding site.

Functionally, guanine nucleotide-binding proteins (G proteins) are involved as modulators or transducers in various transmembrane signaling systems. The polypeptide is Guanine nucleotide-binding protein alpha-7 subunit (gpa-7) (Caenorhabditis elegans).